We begin with the raw amino-acid sequence, 443 residues long: Chromosome partition protein MukF (443 aa).

The segment at 209 to 237 (LDETSGNLRELQDTLNAAGDKLQAQLLRI) is leucine-zipper.

It belongs to the MukF family. As to quaternary structure, interacts, and probably forms a ternary complex, with MukE and MukB via its C-terminal region. The complex formation is stimulated by calcium or magnesium. It is required for an interaction between MukE and MukB.

Its subcellular location is the cytoplasm. It localises to the nucleoid. In terms of biological role, involved in chromosome condensation, segregation and cell cycle progression. May participate in facilitating chromosome segregation by condensation DNA from both sides of a centrally located replisome during cell division. Not required for mini-F plasmid partitioning. Probably acts via its interaction with MukB and MukE. Overexpression results in anucleate cells. It has a calcium binding activity. The polypeptide is Chromosome partition protein MukF (Actinobacillus pleuropneumoniae serotype 7 (strain AP76)).